A 293-amino-acid polypeptide reads, in one-letter code: Histamine N-methyltransferase A (293 aa).

Residue E28 participates in substrate binding. Positions 60, 89, 94, 120, and 142 each coordinate S-adenosyl-L-methionine. N283 contacts substrate.

The protein belongs to the class I-like SAM-binding methyltransferase superfamily. HNMT family. Monomer.

The protein localises to the cytoplasm. The enzyme catalyses histamine + S-adenosyl-L-methionine = N(tau)-methylhistamine + S-adenosyl-L-homocysteine + H(+). Functionally, inactivates histamine by N-methylation. Plays an important role in degrading histamine and in regulating the airway response to histamine. The chain is Histamine N-methyltransferase A (hnmt-a) from Xenopus laevis (African clawed frog).